Consider the following 200-residue polypeptide: ATP-dependent Clp protease proteolytic subunit (200 aa).

The Nucleophile role is filled by Ser-102. His-127 is an active-site residue.

The protein belongs to the peptidase S14 family. As to quaternary structure, fourteen ClpP subunits assemble into 2 heptameric rings which stack back to back to give a disk-like structure with a central cavity, resembling the structure of eukaryotic proteasomes.

It is found in the cytoplasm. It catalyses the reaction Hydrolysis of proteins to small peptides in the presence of ATP and magnesium. alpha-casein is the usual test substrate. In the absence of ATP, only oligopeptides shorter than five residues are hydrolyzed (such as succinyl-Leu-Tyr-|-NHMec, and Leu-Tyr-Leu-|-Tyr-Trp, in which cleavage of the -Tyr-|-Leu- and -Tyr-|-Trp bonds also occurs).. Functionally, cleaves peptides in various proteins in a process that requires ATP hydrolysis. Has a chymotrypsin-like activity. Plays a major role in the degradation of misfolded proteins. The protein is ATP-dependent Clp protease proteolytic subunit of Dehalococcoides mccartyi (strain ATCC BAA-2100 / JCM 16839 / KCTC 5957 / BAV1).